A 504-amino-acid chain; its full sequence is Sensor protein FixL (504 aa).

A disordered region spans residues 1–21; it reads MTDTPTQALPPKAPQAGPTVP. At 1-50 the chain is on the cytoplasmic side; sequence MTDTPTQALPPKAPQAGPTVPGTVRRAVPGSAAAALVIAASHFAALSAFD. A helical transmembrane segment spans residues 51–71; that stretch reads PRILLVLLVIVVLASSGGLFA. The Periplasmic portion of the chain corresponds to 72-99; it reads GLAATAVSALGLALRGLLSGDTVVADWQ. The helical transmembrane segment at 100–118 threads the bilayer; the sequence is SLGLLTIAGAGIAVLGERL. The Cytoplasmic portion of the chain corresponds to 119–504; the sequence is RRTRLDAVAR…TVDEEAMNDA (386 aa). Positions 135–202 constitute a PAS domain; it reads REAHLSSILD…QHDLYLSRYL (68 aa). A PAC domain is found at 203 to 262; the sequence is TTGERRIIGIGRVVTGERKDGATFPMELAVGEMHSVSGRFFTGFIRDLTERQNTEARLQE. The Histidine kinase domain occupies 282-497; that stretch reads TLAHELNQPL…IFRFTLRTVD (216 aa). A Phosphohistidine; by autocatalysis modification is found at His285.

Requires heme as cofactor.

The protein localises to the cell inner membrane. The enzyme catalyses ATP + protein L-histidine = ADP + protein N-phospho-L-histidine.. Its activity is regulated as follows. The heme moiety regulates the kinase activity. Functionally, putative oxygen sensor; modulates the activity of FixJ, a transcriptional activator of nitrogen fixation fixK gene. FixL probably acts as a kinase that phosphorylates FixJ. The protein is Sensor protein FixL (fixL) of Azorhizobium caulinodans (strain ATCC 43989 / DSM 5975 / JCM 20966 / LMG 6465 / NBRC 14845 / NCIMB 13405 / ORS 571).